Consider the following 290-residue polypeptide: 4-hydroxy-tetrahydrodipicolinate synthase (290 aa).

Residue Ser44 participates in pyruvate binding. Tyr132 acts as the Proton donor/acceptor in catalysis. The active-site Schiff-base intermediate with substrate is Lys161. Val202 contributes to the pyruvate binding site.

The protein belongs to the DapA family. As to quaternary structure, homotetramer; dimer of dimers.

It is found in the cytoplasm. The enzyme catalyses L-aspartate 4-semialdehyde + pyruvate = (2S,4S)-4-hydroxy-2,3,4,5-tetrahydrodipicolinate + H2O + H(+). Its pathway is amino-acid biosynthesis; L-lysine biosynthesis via DAP pathway; (S)-tetrahydrodipicolinate from L-aspartate: step 3/4. Functionally, catalyzes the condensation of (S)-aspartate-beta-semialdehyde [(S)-ASA] and pyruvate to 4-hydroxy-tetrahydrodipicolinate (HTPA). The sequence is that of 4-hydroxy-tetrahydrodipicolinate synthase from Hydrogenobaculum sp. (strain Y04AAS1).